A 201-amino-acid polypeptide reads, in one-letter code: FMN-dependent NADH:quinone oxidoreductase (201 aa).

FMN is bound by residues Ser-10, 16–18, 96–99, and 140–143; these read SQS, MYNF, and SRGG.

It belongs to the azoreductase type 1 family. Homodimer. FMN serves as cofactor.

The enzyme catalyses 2 a quinone + NADH + H(+) = 2 a 1,4-benzosemiquinone + NAD(+). The catalysed reaction is N,N-dimethyl-1,4-phenylenediamine + anthranilate + 2 NAD(+) = 2-(4-dimethylaminophenyl)diazenylbenzoate + 2 NADH + 2 H(+). Quinone reductase that provides resistance to thiol-specific stress caused by electrophilic quinones. Its function is as follows. Also exhibits azoreductase activity. Catalyzes the reductive cleavage of the azo bond in aromatic azo compounds to the corresponding amines. This chain is FMN-dependent NADH:quinone oxidoreductase, found in Salmonella choleraesuis (strain SC-B67).